The primary structure comprises 83 residues: Exodeoxyribonuclease 7 small subunit (83 aa).

It belongs to the XseB family. In terms of assembly, heterooligomer composed of large and small subunits.

It is found in the cytoplasm. It carries out the reaction Exonucleolytic cleavage in either 5'- to 3'- or 3'- to 5'-direction to yield nucleoside 5'-phosphates.. Bidirectionally degrades single-stranded DNA into large acid-insoluble oligonucleotides, which are then degraded further into small acid-soluble oligonucleotides. The polypeptide is Exodeoxyribonuclease 7 small subunit (Rhodopseudomonas palustris (strain HaA2)).